The primary structure comprises 151 residues: Large ribosomal subunit protein uL13 (151 aa).

This sequence belongs to the universal ribosomal protein uL13 family. In terms of assembly, part of the 50S ribosomal subunit.

This protein is one of the early assembly proteins of the 50S ribosomal subunit, although it is not seen to bind rRNA by itself. It is important during the early stages of 50S assembly. The chain is Large ribosomal subunit protein uL13 from Mycoplasma mycoides subsp. mycoides SC (strain CCUG 32753 / NCTC 10114 / PG1).